A 212-amino-acid polypeptide reads, in one-letter code: 3-isopropylmalate dehydratase small subunit 1 (212 aa).

The protein belongs to the LeuD family. LeuD type 1 subfamily. As to quaternary structure, heterodimer of LeuC and LeuD.

The enzyme catalyses (2R,3S)-3-isopropylmalate = (2S)-2-isopropylmalate. The protein operates within amino-acid biosynthesis; L-leucine biosynthesis; L-leucine from 3-methyl-2-oxobutanoate: step 2/4. Functionally, catalyzes the isomerization between 2-isopropylmalate and 3-isopropylmalate, via the formation of 2-isopropylmaleate. The chain is 3-isopropylmalate dehydratase small subunit 1 from Chromobacterium violaceum (strain ATCC 12472 / DSM 30191 / JCM 1249 / CCUG 213 / NBRC 12614 / NCIMB 9131 / NCTC 9757 / MK).